Reading from the N-terminus, the 115-residue chain is Large ribosomal subunit protein uL24 (115 aa).

The tract at residues 49-68 (NMKTKHHPPSKDQEKGSITK) is disordered.

It belongs to the universal ribosomal protein uL24 family. Part of the 50S ribosomal subunit.

In terms of biological role, one of two assembly initiator proteins, it binds directly to the 5'-end of the 23S rRNA, where it nucleates assembly of the 50S subunit. One of the proteins that surrounds the polypeptide exit tunnel on the outside of the subunit. The protein is Large ribosomal subunit protein uL24 of Phytoplasma australiense.